The following is a 194-amino-acid chain: Protein GrpE (194 aa).

It belongs to the GrpE family. As to quaternary structure, homodimer.

It is found in the cytoplasm. Functionally, participates actively in the response to hyperosmotic and heat shock by preventing the aggregation of stress-denatured proteins, in association with DnaK and GrpE. It is the nucleotide exchange factor for DnaK and may function as a thermosensor. Unfolded proteins bind initially to DnaJ; upon interaction with the DnaJ-bound protein, DnaK hydrolyzes its bound ATP, resulting in the formation of a stable complex. GrpE releases ADP from DnaK; ATP binding to DnaK triggers the release of the substrate protein, thus completing the reaction cycle. Several rounds of ATP-dependent interactions between DnaJ, DnaK and GrpE are required for fully efficient folding. The chain is Protein GrpE from Aliivibrio fischeri (strain ATCC 700601 / ES114) (Vibrio fischeri).